The sequence spans 432 residues: Glutamate-1-semialdehyde 2,1-aminomutase (432 aa).

Lys-271 is modified (N6-(pyridoxal phosphate)lysine).

Belongs to the class-III pyridoxal-phosphate-dependent aminotransferase family. HemL subfamily. Homodimer. Pyridoxal 5'-phosphate is required as a cofactor.

The protein localises to the cytoplasm. The catalysed reaction is (S)-4-amino-5-oxopentanoate = 5-aminolevulinate. Its pathway is porphyrin-containing compound metabolism; protoporphyrin-IX biosynthesis; 5-aminolevulinate from L-glutamyl-tRNA(Glu): step 2/2. The polypeptide is Glutamate-1-semialdehyde 2,1-aminomutase (Protochlamydia amoebophila (strain UWE25)).